A 205-amino-acid polypeptide reads, in one-letter code: MPIFFYLFTTLIIISSLCVVLSKNSVYSVLWLIFTFINGSGLMILLGAEFLAMLLIVIYVGAVAVLFLFVIMMLDINFNQAITKLRENLSLSIFITLIMFADLVITIILSTKNINYSSNISFAIANNISNTKAIGNVLYTEFMLPFQIAGLILFVAMISCITLTLKKRDRIKHQDIRKQLSHNKSNVILMTKPILNKGVENIKYE.

Helical transmembrane passes span Met1–Leu21, Val26–Leu46, Leu54–Leu74, Leu89–Leu109, and Phe142–Thr162.

It belongs to the complex I subunit 6 family.

The protein localises to the cell membrane. It catalyses the reaction a quinone + NADH + 5 H(+)(in) = a quinol + NAD(+) + 4 H(+)(out). In terms of biological role, NDH-1 shuttles electrons from NADH, via FMN and iron-sulfur (Fe-S) centers, to quinones in the respiratory chain. Couples the redox reaction to proton translocation (for every two electrons transferred, four hydrogen ions are translocated across the cytoplasmic membrane), and thus conserves the redox energy in a proton gradient. The chain is NADH-quinone oxidoreductase subunit J (nuoJ) from Rickettsia prowazekii (strain Madrid E).